The following is an 83-amino-acid chain: Small ribosomal subunit protein bS16 (83 aa).

This sequence belongs to the bacterial ribosomal protein bS16 family.

The protein is Small ribosomal subunit protein bS16 of Shewanella amazonensis (strain ATCC BAA-1098 / SB2B).